A 131-amino-acid chain; its full sequence is MAAAATGLRQAAAAAASTSVKPIFSRDLNEAKRRVRELYRAWYREVPNTVHLMQLDITVKQGRDKVREMFMKNAHVTDPRVVDLLVIKGKMELQETIKVWKQRTHVMRFFHETETPRPKDFLSKFYMGHDP.

The protein belongs to the complex I LYR family. As to quaternary structure, mammalian complex I is composed of 45 different subunits.

It is found in the mitochondrion inner membrane. Accessory subunit of the mitochondrial membrane respiratory chain NADH dehydrogenase (Complex I), that is believed to be not involved in catalysis. Required for proper complex I assembly. Complex I functions in the transfer of electrons from NADH to the respiratory chain. The immediate electron acceptor for the enzyme is believed to be ubiquinone. The chain is NADH dehydrogenase [ubiquinone] 1 alpha subcomplex subunit 6 from Mus musculus (Mouse).